We begin with the raw amino-acid sequence, 236 residues long: 5'-methylthioadenosine/S-adenosylhomocysteine nucleosidase (236 aa).

The active-site Proton acceptor is the Glu12. Substrate contacts are provided by residues Gly78, Ile153, and 174 to 175; that span reads ME. Asp198 (proton donor) is an active-site residue.

Belongs to the PNP/UDP phosphorylase family. MtnN subfamily.

The catalysed reaction is S-adenosyl-L-homocysteine + H2O = S-(5-deoxy-D-ribos-5-yl)-L-homocysteine + adenine. The enzyme catalyses S-methyl-5'-thioadenosine + H2O = 5-(methylsulfanyl)-D-ribose + adenine. It catalyses the reaction 5'-deoxyadenosine + H2O = 5-deoxy-D-ribose + adenine. Its pathway is amino-acid biosynthesis; L-methionine biosynthesis via salvage pathway; S-methyl-5-thio-alpha-D-ribose 1-phosphate from S-methyl-5'-thioadenosine (hydrolase route): step 1/2. Functionally, catalyzes the irreversible cleavage of the glycosidic bond in both 5'-methylthioadenosine (MTA) and S-adenosylhomocysteine (SAH/AdoHcy) to adenine and the corresponding thioribose, 5'-methylthioribose and S-ribosylhomocysteine, respectively. Also cleaves 5'-deoxyadenosine, a toxic by-product of radical S-adenosylmethionine (SAM) enzymes, into 5-deoxyribose and adenine. In Shewanella baltica (strain OS185), this protein is 5'-methylthioadenosine/S-adenosylhomocysteine nucleosidase.